Here is a 193-residue protein sequence, read N- to C-terminus: Ion-translocating oxidoreductase complex subunit A (193 aa).

6 helical membrane-spanning segments follow: residues 4–24 (FLLV…KFLG), 39–59 (IGMG…CWLV), 71–91 (FLRI…IETV), 102–122 (ALGI…LPLM), 134–154 (TLSG…FAGM), and 171–191 (PIAF…AGLV).

Belongs to the NqrDE/RnfAE family. In terms of assembly, the complex is composed of six subunits: RnfA, RnfB, RnfC, RnfD, RnfE and RnfG.

The protein localises to the cellular chromatophore membrane. Part of a membrane-bound complex that couples electron transfer with translocation of ions across the membrane. Required for nitrogen fixation. Involved in electron transfer to nitrogenase. The sequence is that of Ion-translocating oxidoreductase complex subunit A from Rhodobacter capsulatus (Rhodopseudomonas capsulata).